The chain runs to 152 residues: Phospholipase A2 pkP2 (152 aa).

The signal sequence occupies residues 1-21 (MNPAHLLVLLAVCVSLLGASA). Residues 22–27 (IPPLPL) constitute a propeptide that is removed on maturation. Disulfide bonds link Cys-38-Cys-104, Cys-54-Cys-151, Cys-56-Cys-72, Cys-71-Cys-132, Cys-78-Cys-125, Cys-88-Cys-118, and Cys-111-Cys-123. Residues Tyr-55, Gly-57, and Gly-59 each contribute to the Ca(2+) site. His-75 is an active-site residue. Ca(2+) is bound at residue Asp-76. Asp-126 is an active-site residue.

The protein belongs to the phospholipase A2 family. Group I subfamily. Ca(2+) is required as a cofactor.

It is found in the secreted. It carries out the reaction a 1,2-diacyl-sn-glycero-3-phosphocholine + H2O = a 1-acyl-sn-glycero-3-phosphocholine + a fatty acid + H(+). Functionally, PA2 catalyzes the calcium-dependent hydrolysis of the 2-acyl groups in 3-sn-phosphoglycerides. The chain is Phospholipase A2 pkP2 from Laticauda semifasciata (Black-banded sea krait).